Here is a 577-residue protein sequence, read N- to C-terminus: 5'-nucleotidase (577 aa).

The first 30 residues, 1 to 30 (MPRVPSASATGSSALLSLLCAFSLGRAAPF), serve as a signal peptide directing secretion. The Zn(2+) site is built by aspartate 39, histidine 41, aspartate 86, and asparagine 118. A glycan (N-linked (GlcNAc...) asparagine) is linked at asparagine 135. Positions 221 and 244 each coordinate Zn(2+). Residue asparagine 246 coordinates substrate. N-linked (GlcNAc...) asparagine glycans are attached at residues asparagine 311 and asparagine 347. 2 disulfide bridges follow: cysteine 353–cysteine 358 and cysteine 365–cysteine 387. Arginine 354 lines the substrate pocket. 2 residues coordinate substrate: glutamine 390 and arginine 395. An N-linked (GlcNAc...) asparagine glycan is attached at asparagine 403. Residue phenylalanine 417 coordinates substrate. A disulfide bridge links cysteine 476 with cysteine 479. 500-506 (YIAEGGD) provides a ligand contact to substrate. Serine 552 carries GPI-anchor amidated serine lipidation. Residues 553–577 (ATLPIINLKIGLSLFAFLTWFLHCS) constitute a propeptide, removed in mature form.

This sequence belongs to the 5'-nucleotidase family. As to quaternary structure, homodimer. Zn(2+) is required as a cofactor.

The protein resides in the cell membrane. The enzyme catalyses a ribonucleoside 5'-phosphate + H2O = a ribonucleoside + phosphate. Functionally, hydrolyzes extracellular nucleotides into membrane permeable nucleosides. This is 5'-nucleotidase from Diplobatis ommata (Ocellated electric ray).